A 314-amino-acid polypeptide reads, in one-letter code: Aspartate carbamoyltransferase catalytic subunit (314 aa).

Positions 58 and 59 each coordinate carbamoyl phosphate. An L-aspartate-binding site is contributed by K86. R108, H136, and Q139 together coordinate carbamoyl phosphate. Residues R169 and R223 each coordinate L-aspartate. 2 residues coordinate carbamoyl phosphate: G264 and P265.

This sequence belongs to the aspartate/ornithine carbamoyltransferase superfamily. ATCase family. As to quaternary structure, heterododecamer (2C3:3R2) of six catalytic PyrB chains organized as two trimers (C3), and six regulatory PyrI chains organized as three dimers (R2).

The enzyme catalyses carbamoyl phosphate + L-aspartate = N-carbamoyl-L-aspartate + phosphate + H(+). It participates in pyrimidine metabolism; UMP biosynthesis via de novo pathway; (S)-dihydroorotate from bicarbonate: step 2/3. Functionally, catalyzes the condensation of carbamoyl phosphate and aspartate to form carbamoyl aspartate and inorganic phosphate, the committed step in the de novo pyrimidine nucleotide biosynthesis pathway. The sequence is that of Aspartate carbamoyltransferase catalytic subunit from Roseobacter denitrificans (strain ATCC 33942 / OCh 114) (Erythrobacter sp. (strain OCh 114)).